The chain runs to 135 residues: Transcription antitermination protein NusB (135 aa).

This sequence belongs to the NusB family.

Functionally, involved in transcription antitermination. Required for transcription of ribosomal RNA (rRNA) genes. Binds specifically to the boxA antiterminator sequence of the ribosomal RNA (rrn) operons. This chain is Transcription antitermination protein NusB, found in Shewanella pealeana (strain ATCC 700345 / ANG-SQ1).